The chain runs to 328 residues: Beta-ketoacyl-[acyl-carrier-protein] synthase III (328 aa).

Active-site residues include Cys-122 and His-255. Positions Gln-256–Arg-260 are ACP-binding. Asn-285 is a catalytic residue.

This sequence belongs to the thiolase-like superfamily. FabH family. Homodimer.

It is found in the cytoplasm. It carries out the reaction malonyl-[ACP] + acetyl-CoA + H(+) = 3-oxobutanoyl-[ACP] + CO2 + CoA. Its pathway is lipid metabolism; fatty acid biosynthesis. Its function is as follows. Catalyzes the condensation reaction of fatty acid synthesis by the addition to an acyl acceptor of two carbons from malonyl-ACP. Catalyzes the first condensation reaction which initiates fatty acid synthesis and may therefore play a role in governing the total rate of fatty acid production. Possesses both acetoacetyl-ACP synthase and acetyl transacylase activities. Its substrate specificity determines the biosynthesis of branched-chain and/or straight-chain of fatty acids. In Janthinobacterium sp. (strain Marseille) (Minibacterium massiliensis), this protein is Beta-ketoacyl-[acyl-carrier-protein] synthase III.